Here is a 130-residue protein sequence, read N- to C-terminus: Lysozyme C, kidney isozyme (130 aa).

Residues 1–130 (KVFERCELAR…LTSYIQGCGV (130 aa)) form the C-type lysozyme domain. 4 disulfide bridges follow: cysteine 6-cysteine 128, cysteine 30-cysteine 116, cysteine 65-cysteine 81, and cysteine 77-cysteine 95. Catalysis depends on residues glutamate 35 and aspartate 53.

The protein belongs to the glycosyl hydrolase 22 family. Monomer.

It localises to the secreted. It catalyses the reaction Hydrolysis of (1-&gt;4)-beta-linkages between N-acetylmuramic acid and N-acetyl-D-glucosamine residues in a peptidoglycan and between N-acetyl-D-glucosamine residues in chitodextrins.. In terms of biological role, lysozymes have primarily a bacteriolytic function; those in tissues and body fluids are associated with the monocyte-macrophage system and enhance the activity of immunoagents. The polypeptide is Lysozyme C, kidney isozyme (Ovis aries (Sheep)).